Reading from the N-terminus, the 382-residue chain is Ribonuclease D (382 aa).

The 3'-5' exonuclease domain occupies 4-169; it reads ITTTAELASV…DVFAALDADL (166 aa). An HRDC domain is found at 208–289; that stretch reads KPKDLAVMME…QRGLARDPRE (82 aa).

This sequence belongs to the RNase D family. Requires a divalent metal cation as cofactor.

It localises to the cytoplasm. The enzyme catalyses Exonucleolytic cleavage that removes extra residues from the 3'-terminus of tRNA to produce 5'-mononucleotides.. Its function is as follows. Exonuclease involved in the 3' processing of various precursor tRNAs. Initiates hydrolysis at the 3'-terminus of an RNA molecule and releases 5'-mononucleotides. This chain is Ribonuclease D, found in Nitrobacter hamburgensis (strain DSM 10229 / NCIMB 13809 / X14).